Here is a 125-residue protein sequence, read N- to C-terminus: SOSS complex subunit C homolog B (125 aa).

2 disordered regions span residues P44–F73 and P105–K125.

It belongs to the SOSS-C family.

The protein is SOSS complex subunit C homolog B of Drosophila willistoni (Fruit fly).